The following is a 165-amino-acid chain: Phosphopantetheine adenylyltransferase (165 aa).

Serine 10 is a binding site for substrate. Residues 10–11 and histidine 18 contribute to the ATP site; that span reads SF. Residues lysine 42, threonine 79, and arginine 93 each coordinate substrate. ATP-binding positions include 94-96, glutamate 104, and 129-135; these read GLR and VRPITAT.

This sequence belongs to the bacterial CoaD family. In terms of assembly, homohexamer. It depends on Mg(2+) as a cofactor.

The protein resides in the cytoplasm. It carries out the reaction (R)-4'-phosphopantetheine + ATP + H(+) = 3'-dephospho-CoA + diphosphate. The protein operates within cofactor biosynthesis; coenzyme A biosynthesis; CoA from (R)-pantothenate: step 4/5. In terms of biological role, reversibly transfers an adenylyl group from ATP to 4'-phosphopantetheine, yielding dephospho-CoA (dPCoA) and pyrophosphate. The chain is Phosphopantetheine adenylyltransferase from Rhodopseudomonas palustris (strain HaA2).